We begin with the raw amino-acid sequence, 482 residues long: Glutamyl-tRNA(Gln) amidotransferase subunit A (482 aa).

Residues lysine 74 and serine 149 each act as charge relay system in the active site. The active-site Acyl-ester intermediate is the serine 173.

This sequence belongs to the amidase family. GatA subfamily. As to quaternary structure, heterotrimer of A, B and C subunits.

It carries out the reaction L-glutamyl-tRNA(Gln) + L-glutamine + ATP + H2O = L-glutaminyl-tRNA(Gln) + L-glutamate + ADP + phosphate + H(+). Functionally, allows the formation of correctly charged Gln-tRNA(Gln) through the transamidation of misacylated Glu-tRNA(Gln) in organisms which lack glutaminyl-tRNA synthetase. The reaction takes place in the presence of glutamine and ATP through an activated gamma-phospho-Glu-tRNA(Gln). In Prochlorococcus marinus (strain AS9601), this protein is Glutamyl-tRNA(Gln) amidotransferase subunit A.